The following is a 300-amino-acid chain: tRNA pseudouridine synthase B (300 aa).

Aspartate 38 functions as the Nucleophile in the catalytic mechanism.

This sequence belongs to the pseudouridine synthase TruB family. Type 1 subfamily.

The catalysed reaction is uridine(55) in tRNA = pseudouridine(55) in tRNA. Functionally, responsible for synthesis of pseudouridine from uracil-55 in the psi GC loop of transfer RNAs. This is tRNA pseudouridine synthase B from Dehalococcoides mccartyi (strain ATCC BAA-2100 / JCM 16839 / KCTC 5957 / BAV1).